The sequence spans 164 residues: Superoxide dismutase [Cu-Zn] 3 (164 aa).

Cu cation is bound by residues His51, His53, and His68. Cysteines 62 and 151 form a disulfide. The Zn(2+) site is built by His68, His76, His85, and Asp88. His125 lines the Cu cation pocket. A Peroxisome localization signal motif is present at residues 162-164 (AKL).

The protein belongs to the Cu-Zn superoxide dismutase family. In terms of assembly, homodimer. The cofactor is Cu cation. Requires Zn(2+) as cofactor. As to expression, expressed in leaves (at protein level).

It is found in the peroxisome. The enzyme catalyses 2 superoxide + 2 H(+) = H2O2 + O2. Functionally, destroys radicals which are normally produced within the cells and which are toxic to biological systems. In Arabidopsis thaliana (Mouse-ear cress), this protein is Superoxide dismutase [Cu-Zn] 3 (CSD3).